Here is a 116-residue protein sequence, read N- to C-terminus: Large ribosomal subunit protein bL17 (116 aa).

This sequence belongs to the bacterial ribosomal protein bL17 family. Part of the 50S ribosomal subunit. Contacts protein L32.

The sequence is that of Large ribosomal subunit protein bL17 from Prochlorococcus marinus subsp. pastoris (strain CCMP1986 / NIES-2087 / MED4).